Here is a 61-residue protein sequence, read N- to C-terminus: Metallothionein-1E (61 aa).

Methionine 1 is subject to N-acetylmethionine. The tract at residues 1–29 (MDPNCSCATGGSCTCAGSCKCKECKCTSC) is beta. The a divalent metal cation site is built by cysteine 5, cysteine 7, cysteine 13, cysteine 15, cysteine 19, cysteine 21, cysteine 24, cysteine 26, cysteine 29, cysteine 33, cysteine 34, cysteine 36, cysteine 37, cysteine 41, cysteine 44, cysteine 48, cysteine 50, cysteine 57, cysteine 59, and cysteine 60. Residues 30–61 (KKSCCSCCPVGCAKCAQGCVCKGASEKCSCCA) are alpha.

Belongs to the metallothionein superfamily. Type 1 family. Monomer.

Metallothioneins have a high content of cysteine residues that bind various heavy metals; these proteins are transcriptionally regulated by both heavy metals and glucocorticoids. The chain is Metallothionein-1E (MT1E) from Homo sapiens (Human).